Consider the following 1103-residue polypeptide: PH, RCC1 and FYVE domains-containing protein 1 (1103 aa).

A PH domain is found at 22–123 (KKGTQLLKYG…IWIGGLKTLI (102 aa)). Residues 144 to 233 (DASRELTSSS…SSSHGSAADD (90 aa)) form a disordered region. Composition is skewed to low complexity over residues 151-169 (SSSP…SSPG) and 217-231 (SVSS…GSAA). RCC1 repeat units follow at residues 237–298 (LGDV…FVTR), 299–351 (QGEI…AVTL), 353–406 (GELY…LITS), 407–458 (YGRL…AVVE), 471–522 (SGKL…GLTT), 524–574 (GQVF…ALTS), and 575–626 (RNEV…AICL). The segment at 632 to 694 (GAEQSQCSTC…VCDSCYVKLS (63 aa)) adopts an FYVE-type zinc-finger fold. Positions 638, 641, 654, 657, 662, 665, 686, and 689 each coordinate Zn(2+). Residues 783–818 (ATPKLAQAPSGISSRSVSPFSRRSSPPRSATPMPST) are disordered. A compositionally biased stretch (low complexity) spans 791-818 (PSGISSRSVSPFSRRSSPPRSATPMPST). The stretch at 828-904 (ADNMKKTNEI…IAQLKDVAEK (77 aa)) forms a coiled coil. The span at 962 to 979 (NLQSPKQTPRASERNSNA) shows a compositional bias: polar residues. Positions 962-988 (NLQSPKQTPRASERNSNAYPADPRLSS) are disordered. The BRX domain occupies 1023–1078 (AEWIEQYEPGVYITLVALHDGTRDLRRVRFSRRRFGEHQAETWWSENREKVYEKYN). The disordered stretch occupies residues 1079–1103 (VRVSEKSTASQTHRDRDEEEEDIPH).

In terms of tissue distribution, mostly expressed in flowers, and, to a lower extent, in stems, leaves, siliques, seeds.

Functionally, binds to phosphatidic acid and to phosphoinositides such as PtdIns3P, PtdIns(3,4)P(2), PtdIns(3,4,5)P(3) and PtdIns(4,5)P(2). Catalyzes guanine nucleotide exchange on specific Rab proteins. This is PH, RCC1 and FYVE domains-containing protein 1 from Arabidopsis thaliana (Mouse-ear cress).